A 273-amino-acid polypeptide reads, in one-letter code: NH(3)-dependent NAD(+) synthetase (273 aa).

G47 to S54 lines the ATP pocket. Mg(2+) is bound at residue D53. R139 is a deamido-NAD(+) binding site. Position 159 (T159) interacts with ATP. Residue E164 participates in Mg(2+) binding. The deamido-NAD(+) site is built by K172 and D179. ATP-binding residues include K188 and T210. Position 259–260 (H259–K260) interacts with deamido-NAD(+).

It belongs to the NAD synthetase family. Homodimer.

It catalyses the reaction deamido-NAD(+) + NH4(+) + ATP = AMP + diphosphate + NAD(+) + H(+). It participates in cofactor biosynthesis; NAD(+) biosynthesis; NAD(+) from deamido-NAD(+) (ammonia route): step 1/1. Functionally, catalyzes the ATP-dependent amidation of deamido-NAD to form NAD. Uses ammonia as a nitrogen source. The polypeptide is NH(3)-dependent NAD(+) synthetase (Staphylococcus aureus (strain COL)).